The chain runs to 385 residues: UDP-N-acetylglucosamine--N-acetylmuramyl-(pentapeptide) pyrophosphoryl-undecaprenol N-acetylglucosamine transferase (385 aa).

Residues 11–13 (TGG), asparagine 117, arginine 160, serine 215, and glutamine 317 contribute to the UDP-N-acetyl-alpha-D-glucosamine site.

Belongs to the glycosyltransferase 28 family. MurG subfamily.

It is found in the cell inner membrane. The enzyme catalyses di-trans,octa-cis-undecaprenyl diphospho-N-acetyl-alpha-D-muramoyl-L-alanyl-D-glutamyl-meso-2,6-diaminopimeloyl-D-alanyl-D-alanine + UDP-N-acetyl-alpha-D-glucosamine = di-trans,octa-cis-undecaprenyl diphospho-[N-acetyl-alpha-D-glucosaminyl-(1-&gt;4)]-N-acetyl-alpha-D-muramoyl-L-alanyl-D-glutamyl-meso-2,6-diaminopimeloyl-D-alanyl-D-alanine + UDP + H(+). The protein operates within cell wall biogenesis; peptidoglycan biosynthesis. Cell wall formation. Catalyzes the transfer of a GlcNAc subunit on undecaprenyl-pyrophosphoryl-MurNAc-pentapeptide (lipid intermediate I) to form undecaprenyl-pyrophosphoryl-MurNAc-(pentapeptide)GlcNAc (lipid intermediate II). The chain is UDP-N-acetylglucosamine--N-acetylmuramyl-(pentapeptide) pyrophosphoryl-undecaprenol N-acetylglucosamine transferase from Rickettsia typhi (strain ATCC VR-144 / Wilmington).